Reading from the N-terminus, the 131-residue chain is Small ribosomal subunit protein uS12 (131 aa).

Asp-89 carries the post-translational modification 3-methylthioaspartic acid.

The protein belongs to the universal ribosomal protein uS12 family. In terms of assembly, part of the 30S ribosomal subunit. Contacts proteins S8 and S17. May interact with IF1 in the 30S initiation complex.

Functionally, with S4 and S5 plays an important role in translational accuracy. Its function is as follows. Interacts with and stabilizes bases of the 16S rRNA that are involved in tRNA selection in the A site and with the mRNA backbone. Located at the interface of the 30S and 50S subunits, it traverses the body of the 30S subunit contacting proteins on the other side and probably holding the rRNA structure together. The combined cluster of proteins S8, S12 and S17 appears to hold together the shoulder and platform of the 30S subunit. The chain is Small ribosomal subunit protein uS12 from Campylobacter concisus (strain 13826).